Here is a 130-residue protein sequence, read N- to C-terminus: Small ribosomal subunit protein uS11 (130 aa).

It belongs to the universal ribosomal protein uS11 family. In terms of assembly, part of the 30S ribosomal subunit. Interacts with proteins S7 and S18. Binds to IF-3.

Functionally, located on the platform of the 30S subunit, it bridges several disparate RNA helices of the 16S rRNA. Forms part of the Shine-Dalgarno cleft in the 70S ribosome. This is Small ribosomal subunit protein uS11 from Buchnera aphidicola subsp. Schizaphis graminum (strain Sg).